A 165-amino-acid chain; its full sequence is K(+)/H(+) antiporter subunit KhtT (165 aa).

Residues 76–161 (LESIEMAFSD…LKKLIHDFLS (86 aa)) enclose the RCK C-terminal domain.

In terms of assembly, the transporter is composed of the integral membrane protein KhtU and the regulatory protein KhtT.

It localises to the cell membrane. With respect to regulation, binds cyclic di-AMP (c-di-AMP), which may regulate the activity. Required for activity of the potassium/proton antiporter KhtU. Involved in protection of the cell from methylglyoxal, a toxic by-product of glycolysis. The protein is K(+)/H(+) antiporter subunit KhtT of Bacillus subtilis (strain 168).